The following is a 316-amino-acid chain: Biotin synthase (316 aa).

The 227-residue stretch at 42 to 268 folds into the Radical SAM core domain; the sequence is LCGESVDLCT…INPTAYIRMA (227 aa). [4Fe-4S] cluster-binding residues include C60, C64, and C67. S104, C136, C196, and R266 together coordinate [2Fe-2S] cluster.

The protein belongs to the radical SAM superfamily. Biotin synthase family. In terms of assembly, homodimer. It depends on [4Fe-4S] cluster as a cofactor. Requires [2Fe-2S] cluster as cofactor.

The enzyme catalyses (4R,5S)-dethiobiotin + (sulfur carrier)-SH + 2 reduced [2Fe-2S]-[ferredoxin] + 2 S-adenosyl-L-methionine = (sulfur carrier)-H + biotin + 2 5'-deoxyadenosine + 2 L-methionine + 2 oxidized [2Fe-2S]-[ferredoxin]. The protein operates within cofactor biosynthesis; biotin biosynthesis; biotin from 7,8-diaminononanoate: step 2/2. In terms of biological role, catalyzes the conversion of dethiobiotin (DTB) to biotin by the insertion of a sulfur atom into dethiobiotin via a radical-based mechanism. In Clostridium beijerinckii (strain ATCC 51743 / NCIMB 8052) (Clostridium acetobutylicum), this protein is Biotin synthase.